The sequence spans 358 residues: NADH-quinone oxidoreductase subunit H (358 aa).

A run of 8 helical transmembrane segments spans residues 20-40 (ITVGLVVSVIVKIVIILIPLI), 95-115 (ALFYIGPIMSLAPSFAAWAVI), 128-148 (IGLLYILMITSLSVYGVIIAG), 168-188 (ISYEIAMSAALVCVVMVSGSM), 206-226 (VFSWNWLPLFPIFIVYLISAV), 253-273 (GFAFALFFLAEYIFMILISAL), 290-310 (WGFIGTPSAFWMFVKMAAVLY), and 334-354 (VLIPIGFAYIVVLGVWMISPL).

This sequence belongs to the complex I subunit 1 family. NDH-1 is composed of 14 different subunits. Subunits NuoA, H, J, K, L, M, N constitute the membrane sector of the complex.

It is found in the cell inner membrane. It carries out the reaction a quinone + NADH + 5 H(+)(in) = a quinol + NAD(+) + 4 H(+)(out). Its function is as follows. NDH-1 shuttles electrons from NADH, via FMN and iron-sulfur (Fe-S) centers, to quinones in the respiratory chain. The immediate electron acceptor for the enzyme in this species is believed to be ubiquinone. Couples the redox reaction to proton translocation (for every two electrons transferred, four hydrogen ions are translocated across the cytoplasmic membrane), and thus conserves the redox energy in a proton gradient. This subunit may bind ubiquinone. This chain is NADH-quinone oxidoreductase subunit H, found in Neisseria meningitidis serogroup C (strain 053442).